The following is a 351-amino-acid chain: MFYLLGLRLLKYITFRMAYATIFAFLLSLIVGPYIILKLKKLRADQILREDGPKRHLSEKAGIPTMGGILIFFCVFISLVFWSNILNVYFLIMVFVMLGFAFLGFIDDFLKIKKKTSDGLKARFKIYGQIIFSFFSVGILYYFGGEHVSVIYFPFIKSFQIDLGLFYIPFGMFILISASNSFNLTDGLDGLAIGLSIVITGALIIIAYLTSRADFAAYLHIPNIKGSEELVIFLGALLGGSFGFLWFNAYPAKIMMGDTGSLALGAILGMAALILKSEILFSILAGVFIIETMSVIIQVLVYKKTKKRVFKMAPLHHHFEELGWSEMQVVIRFWIIGLIFAIIALSTIKIR.

The next 10 membrane-spanning stretches (helical) occupy residues 17 to 37 (MAYATIFAFLLSLIVGPYIIL), 62 to 82 (GIPTMGGILIFFCVFISLVFW), 85 to 105 (ILNVYFLIMVFVMLGFAFLGF), 130 to 150 (IIFSFFSVGILYYFGGEHVSV), 158 to 178 (SFQIDLGLFYIPFGMFILISA), 190 to 210 (GLAIGLSIVITGALIIIAYLT), 230 to 250 (LVIFLGALLGGSFGFLWFNAY), 254 to 274 (IMMGDTGSLALGAILGMAALI), 279 to 299 (ILFSILAGVFIIETMSVIIQV), and 328 to 348 (QVVIRFWIIGLIFAIIALSTI).

This sequence belongs to the glycosyltransferase 4 family. MraY subfamily. It depends on Mg(2+) as a cofactor.

It localises to the cell inner membrane. It catalyses the reaction UDP-N-acetyl-alpha-D-muramoyl-L-alanyl-gamma-D-glutamyl-meso-2,6-diaminopimeloyl-D-alanyl-D-alanine + di-trans,octa-cis-undecaprenyl phosphate = di-trans,octa-cis-undecaprenyl diphospho-N-acetyl-alpha-D-muramoyl-L-alanyl-D-glutamyl-meso-2,6-diaminopimeloyl-D-alanyl-D-alanine + UMP. Its pathway is cell wall biogenesis; peptidoglycan biosynthesis. Catalyzes the initial step of the lipid cycle reactions in the biosynthesis of the cell wall peptidoglycan: transfers peptidoglycan precursor phospho-MurNAc-pentapeptide from UDP-MurNAc-pentapeptide onto the lipid carrier undecaprenyl phosphate, yielding undecaprenyl-pyrophosphoryl-MurNAc-pentapeptide, known as lipid I. The chain is Phospho-N-acetylmuramoyl-pentapeptide-transferase from Borreliella burgdorferi (strain ATCC 35210 / DSM 4680 / CIP 102532 / B31) (Borrelia burgdorferi).